We begin with the raw amino-acid sequence, 67 residues long: DNA gyrase inhibitor YacG (67 aa).

C8, C11, C27, and C31 together coordinate Zn(2+).

Belongs to the DNA gyrase inhibitor YacG family. In terms of assembly, interacts with GyrB. Zn(2+) is required as a cofactor.

Functionally, inhibits all the catalytic activities of DNA gyrase by preventing its interaction with DNA. Acts by binding directly to the C-terminal domain of GyrB, which probably disrupts DNA binding by the gyrase. The polypeptide is DNA gyrase inhibitor YacG (Ralstonia pickettii (strain 12J)).